We begin with the raw amino-acid sequence, 602 residues long: SAGA complex subunit SPT8 (602 aa).

The interval methionine 1–alanine 141 is disordered. Composition is skewed to acidic residues over residues valine 14–methionine 23 and glutamate 36–aspartate 75. Threonine 85 bears the Phosphothreonine mark. A phosphoserine mark is found at serine 108, serine 123, and serine 131. WD repeat units follow at residues proline 173–leucine 212 and glycine 305–lysine 346. The interval valine 366 to isoleucine 418 is disordered. A compositionally biased stretch (acidic residues) spans asparagine 378–lysine 395. WD repeat units lie at residues lysine 415 to leucine 454, serine 506 to asparagine 544, and histidine 560 to aspartate 600. The residue at position 451 (serine 451) is a Phosphoserine.

It belongs to the WD repeat SPT8 family. In terms of assembly, component of the 1.8 MDa SAGA (Spt-Ada-Gcn5 acetyltransferase) complex, which is composed of 19 subunits TRA1, SPT7, TAF5, NGG1/ADA3, SGF73, SPT20/ADA5, SPT8, TAF12, TAF6, HFI1/ADA1, UBP8, GCN5, ADA2, SPT3, SGF29, TAF10, TAF9, SGF11 and SUS1. The SAGA complex is composed of 4 modules, namely the HAT (histone acetyltransferase) module (GCN5, ADA2, NGG1/ADA3 and SGF29), the DUB (deubiquitinating) module (UBP8, SGF11, SGF73 and SUS1), the core or TAF (TBP-associated factor) module (TAF5, TAF6, TAF9, TAF10 and TAF12), and the Tra1 or SPT (Suppressor of Ty) module (TRA1, HFI1/ADA1, SPT3, SPT7, SPT8 and SPT20/ADA5). The Tra1/SPT module binds activators, the core module recruits TBP (TATA-binding protein), the HAT module contains the histone H3 acetyltransferase GCN5, and the DUB module comprises the histone H2B deubiquitinase UBP8.

The protein resides in the nucleus. Functionally, component of the transcription coactivator SAGA complex. SAGA acts as a general cofactor required for essentially all RNA polymerase II transcription. At the promoters, SAGA is required for transcription pre-initiation complex (PIC) recruitment. It influences RNA polymerase II transcriptional activity through different activities such as TBP interaction (via core/TAF module) and promoter selectivity, interaction with transcription activators (via Tra1/SPT module), and chromatin modification through histone acetylation (via HAT module) and deubiquitination (via DUB module). SAGA preferentially acetylates histones H3 (to form H3K9ac, H3K14ac, H3K18ac and H3K23ac) and H2B and deubiquitinates histone H2B. SAGA interacts with DNA via upstream activating sequences (UASs). During SAGA-mediated transcriptional inhibition, SPT3 and SPT8 prevent binding of TBP to the TATA box. This chain is SAGA complex subunit SPT8 (SPT8), found in Saccharomyces cerevisiae (strain ATCC 204508 / S288c) (Baker's yeast).